The primary structure comprises 941 residues: Protein translocase subunit SecA (941 aa).

ATP contacts are provided by residues Gln87, 105 to 109 (GEGKT), and Asp524. Residues 871–919 (DEQPPMPAMEAHKLDPNTGEDQVAQAQSGLAPVAPAKRDPANPATWGKV) form a disordered region. Positions 925, 927, 936, and 937 each coordinate Zn(2+).

Belongs to the SecA family. As to quaternary structure, monomer and homodimer. Part of the essential Sec protein translocation apparatus which comprises SecA, SecYEG and auxiliary proteins SecDF-YajC and YidC. Zn(2+) serves as cofactor.

It is found in the cell inner membrane. The protein resides in the cytoplasm. The catalysed reaction is ATP + H2O + cellular proteinSide 1 = ADP + phosphate + cellular proteinSide 2.. Its function is as follows. Part of the Sec protein translocase complex. Interacts with the SecYEG preprotein conducting channel. Has a central role in coupling the hydrolysis of ATP to the transfer of proteins into and across the cell membrane, serving both as a receptor for the preprotein-SecB complex and as an ATP-driven molecular motor driving the stepwise translocation of polypeptide chains across the membrane. The chain is Protein translocase subunit SecA from Afipia carboxidovorans (strain ATCC 49405 / DSM 1227 / KCTC 32145 / OM5) (Oligotropha carboxidovorans).